The sequence spans 31 residues: Cytochrome b6-f complex subunit 6 (31 aa).

The helical transmembrane segment at Ile3–Leu23 threads the bilayer.

Belongs to the PetL family. As to quaternary structure, the 4 large subunits of the cytochrome b6-f complex are cytochrome b6, subunit IV (17 kDa polypeptide, PetD), cytochrome f and the Rieske protein, while the 4 small subunits are PetG, PetL, PetM and PetN. The complex functions as a dimer.

It is found in the plastid. The protein localises to the chloroplast thylakoid membrane. Its function is as follows. Component of the cytochrome b6-f complex, which mediates electron transfer between photosystem II (PSII) and photosystem I (PSI), cyclic electron flow around PSI, and state transitions. PetL is important for photoautotrophic growth as well as for electron transfer efficiency and stability of the cytochrome b6-f complex. The sequence is that of Cytochrome b6-f complex subunit 6 from Trieres chinensis (Marine centric diatom).